The chain runs to 494 residues: ATP synthase subunit beta, plastid (494 aa).

169–176 contacts ATP; it reads GGAGVGKT.

Belongs to the ATPase alpha/beta chains family. F-type ATPases have 2 components, CF(1) - the catalytic core - and CF(0) - the membrane proton channel. CF(1) has five subunits: alpha(3), beta(3), gamma(1), delta(1), epsilon(1). CF(0) has four main subunits: a(1), b(1), b'(1) and c(9-12).

Its subcellular location is the plastid thylakoid membrane. The catalysed reaction is ATP + H2O + 4 H(+)(in) = ADP + phosphate + 5 H(+)(out). Its function is as follows. Produces ATP from ADP in the presence of a proton gradient across the membrane. The catalytic sites are hosted primarily by the beta subunits. The sequence is that of ATP synthase subunit beta, plastid (atpB) from Cuscuta gronovii (Common dodder).